We begin with the raw amino-acid sequence, 143 residues long: 6,7-dimethyl-8-ribityllumazine synthase (143 aa).

5-amino-6-(D-ribitylamino)uracil is bound by residues tryptophan 10, 44–46 (SFE), and 68–70 (CVI). 73 to 74 (DT) is a (2S)-2-hydroxy-3-oxobutyl phosphate binding site. The Proton donor role is filled by histidine 76. Tyrosine 101 provides a ligand contact to 5-amino-6-(D-ribitylamino)uracil. Residue arginine 115 coordinates (2S)-2-hydroxy-3-oxobutyl phosphate.

This sequence belongs to the DMRL synthase family.

The enzyme catalyses (2S)-2-hydroxy-3-oxobutyl phosphate + 5-amino-6-(D-ribitylamino)uracil = 6,7-dimethyl-8-(1-D-ribityl)lumazine + phosphate + 2 H2O + H(+). The protein operates within cofactor biosynthesis; riboflavin biosynthesis; riboflavin from 2-hydroxy-3-oxobutyl phosphate and 5-amino-6-(D-ribitylamino)uracil: step 1/2. Functionally, catalyzes the formation of 6,7-dimethyl-8-ribityllumazine by condensation of 5-amino-6-(D-ribitylamino)uracil with 3,4-dihydroxy-2-butanone 4-phosphate. This is the penultimate step in the biosynthesis of riboflavin. The sequence is that of 6,7-dimethyl-8-ribityllumazine synthase from Bacteroides fragilis (strain YCH46).